The following is a 420-amino-acid chain: E3 ubiquitin protein ligase DRIP2 (420 aa).

An RING-type zinc finger spans residues 20-61 (CPLCDKLLRDATTISECLHTFCRKCIYEKITEDEIESCPVCD). Polar residues predominate over residues 113 to 123 (ISSLVVSTPRV). Disordered stretches follow at residues 113 to 201 (ISSL…KDVD) and 226 to 289 (DPKS…TFGD). Residues 154–165 (KKEEEFGDDHVE) show a composition bias toward basic and acidic residues. Polar residues-rich tracts occupy residues 166-194 (SASS…SLSN) and 232-242 (GNASHNDVQGS). Basic residues predominate over residues 244-253 (TKTKDHKRKC). Positions 260-273 (SNNGDPTTSETATL) are enriched in polar residues. Basic residues predominate over residues 274–284 (KRTRRTRRKRS).

As to quaternary structure, interacts with DREB2A. Auto-ubiquitinated. Expressed in roots, leaves and flowers.

It carries out the reaction S-ubiquitinyl-[E2 ubiquitin-conjugating enzyme]-L-cysteine + [acceptor protein]-L-lysine = [E2 ubiquitin-conjugating enzyme]-L-cysteine + N(6)-ubiquitinyl-[acceptor protein]-L-lysine.. It participates in protein modification; protein ubiquitination. Functionally, E3 ubiquitin-protein ligase that acts as a negative regulator of the response to water stress. Mediates ubiquitination and subsequent proteasomal degradation of the drought-induced transcriptional activator DREB2A. Functionally redundant with DRIP1. In Arabidopsis thaliana (Mouse-ear cress), this protein is E3 ubiquitin protein ligase DRIP2 (DRIP2).